The chain runs to 219 residues: Transmembrane emp24 domain-containing protein 10 (219 aa).

Positions 1-31 (MSGSSGPLSWPGPRPCALLFLLLLGPSSVLA) are cleaved as a signal peptide. The tract at residues 1 to 142 (MSGSSGPLSW…KNYEEIAKVE (142 aa)) is required for interaction with STX17. At 32 to 185 (ISFHLPVNSR…RDTNESTNTR (154 aa)) the chain is on the lumenal side. One can recognise a GOLD domain in the interval 41–193 (RKCLREEIHK…TRVLYFSIFS (153 aa)). The required for TMED10 and TMED2 cis-Golgi network localization stretch occupies residues 147-178 (LEVELRRLEDLSESIVNDFAYMKKREEEMRDT). Dimethylated arginine is present on residues arginine 171 and arginine 176. The N-linked (GlcNAc...) asparagine glycan is linked to asparagine 179. A helical transmembrane segment spans residues 186-206 (VLYFSIFSMLCLIGLATWQVF). An interaction with COPG1 region spans residues 204 to 219 (QVFYLRRFFKAKKLIE). The Cytoplasmic segment spans residues 207–219 (YLRRFFKAKKLIE). Positions 207–219 (YLRRFFKAKKLIE) are interaction with ARF1 and IL1B. The COPII vesicle coat-binding signature appears at 211-212 (FF). The short motif at 211–219 (FFKAKKLIE) is the COPI vesicle coat-binding element.

It belongs to the EMP24/GP25L family. Predominantly dimeric and to a lesser extent monomeric in the ER. Monomer and dimer in ERGIC and cis-Golgi network. Forms homooligomer (via GOLD domain); the assembly is promoted by direct binding with leaderless cargos and may form a protein channel that facilitates cargo entry into the ERGIC. Forms heterooligomeric complexes with other members of the p24 family such as TMED2, TMED7 and TMED9. Interacts (via GOLD domain) with TMED2 (via GOLD domain); the complex is required for export of TMED10 from the ER to the cis-Golgi network; the complex is proposed to be involved in cis-Golgi network dynamics and / or biogenesis. Associates with the COPI vesicle coat subunits (coatomer). Tetramerization of the cytoplasmic domain at the Golgi membrane in vitro; the complex is proposed to interact with COPI coatomer and induce budding of the vesicles. Interacts with COPG1; the interaction involves TMED10 homodimer. Interacts with ARF1 (GDP-bound); the interaction probably involves a TMED10 oligomer. Interacts with SEC23A, SEC24B, SEC24C and SEC24D components of the coat protein complex II/COPII, indicative of an association of TMED10 with the COPII vesicle coat. Interacts with CD59. Interacts with MPPE1/PGAP5; the complex might recruit and sort GPI-anchored proteins to the ER-exit site, or the interaction might lead to recycling of PGAP5 between the ER and the Golgi. Interacts with F2LR1/PAR2. Interacts with KDELR2/ERD2; the interaction is disrupted by KDELR2 ligand. Found in a complex composed at least of SURF4, TMED2 and TMED10. Associates with the presenilin-dependent gamma-secretase complex. Interacts with STX17; the interaction is direct. Interacts with IL-1; the interaction is direct. Interacts with RAB21 (active GTP-bound form); the interaction is indirect and regulates TMED10 abundance and localization at the Golgi.

Its subcellular location is the endoplasmic reticulum membrane. It localises to the endoplasmic reticulum-Golgi intermediate compartment membrane. It is found in the golgi apparatus membrane. The protein localises to the golgi apparatus. The protein resides in the cis-Golgi network membrane. Its subcellular location is the trans-Golgi network membrane. It localises to the cytoplasmic vesicle. It is found in the secretory vesicle membrane. The protein localises to the cell membrane. The protein resides in the melanosome. Cargo receptor involved in protein vesicular trafficking and quality control in the endoplasmic reticulum (ER) and Golgi. The p24 protein family is a group of transmembrane proteins that bind coat protein complex I/COPI and coat protein complex II/COPII involved in vesicular trafficking between the membranes. Acts at the lumenal side for incorporation of secretory cargo molecules into transport vesicles and involved in vesicle coat formation at the cytoplasmic side. Mainly functions in the early secretory pathway and cycles between the ER, ER-Golgi intermediate compartment (ERGIC) and Golgi, mediating cargo transport through COPI and COPII-coated vesicles. In COPII vesicle-mediated anterograde transport, involved in the transport of GPI-anchored proteins by acting together with TMED2 as their cargo receptor; the function specifically implies SEC24C and SEC24D of the COPII vesicle coat and lipid raft-like microdomains of the ER. Recognizes GPI anchors structural remodeled in the ER by the GPI inositol-deacylase/PGAP1 and the metallophosphoesterase MPPE1/PGAP5. In COPI vesicle-mediated retrograde transport, involved in the biogenesis of COPI vesicles and vesicle coat recruitment. Involved in trafficking of amyloid beta A4 protein and soluble APP-beta release (independent from the modulation of gamma-secretase activity). Involved in the KDELR2-mediated retrograde transport of the toxin A subunit (CTX-A-K63)together with COPI and the COOH terminus of KDELR2. On Golgi membranes, acts as a primary receptor for ARF1-GDP, a GTP-binding protein involved in COPI-vesicle formation. Increases coatomer-dependent GTPase-activating activity of ARFGAP2 which mediates the hydrolysis of ARF1-bound GTP and therefore modulates protein trafficking from the Golgi apparatus. Involved in the exocytic trafficking of G protein-coupled receptors F2LR1/PAR2 (trypsin and tryspin-like enzyme receptor), OPRM1 (opioid receptor) and P2RY4 (UTD and UDP receptor) from the Golgi to the plasma membrane, thus contributing to receptor resensitization. In addition to its cargo receptor activity, may also act as a protein channel after oligomerization, facilitating the post-translational entry of leaderless cytoplasmic cargo into the ERGIC. Involved in the translocation into ERGIC, the vesicle entry and the secretion of leaderless cargos (lacking the secretion signal sequence), including the mature form of interleukin 1/IL-1 family members, the alpha-crystallin B chain HSPB5, the carbohydrate-binding proteins galectin-1/LGALS1 and galectin-3/LGALS3, the microtubule-associated protein Tau/MAPT, and the annexin A1/ANXA1; the translocation process is dependent on cargo protein unfolding and enhanced by chaperones HSP90AB1 and HSP90B1/GRP9. Could also associates with the presenilin-dependent gamma-secretase complex in order to regulate gamma-cleavages of the amyloid beta A4 protein to yield amyloid-beta 40/Abeta40. This chain is Transmembrane emp24 domain-containing protein 10 (TMED10), found in Mesocricetus auratus (Golden hamster).